Here is a 600-residue protein sequence, read N- to C-terminus: Alpha pinene synthase, chloroplastic (600 aa).

The interval 1 to 27 (MSSISMHAGPLNISAANNHHPSWDRRV) is disordered. A chloroplast-targeting transit peptide spans 1-31 (MSSISMHAGPLNISAANNHHPSWDRRVSKPR). Residues Asp-354, Asp-358, Asp-498, and Glu-506 each coordinate Mg(2+). Positions 354-358 (DDVYD) match the DDXXD motif motif.

This sequence belongs to the terpene synthase family. Tpsa subfamily. The cofactor is Mg(2+). Mn(2+) serves as cofactor. Expressed at low levels in leaves.

It localises to the plastid. The protein resides in the chloroplast. The catalysed reaction is (2E)-geranyl diphosphate = alpha-pinene + diphosphate. The protein operates within secondary metabolite biosynthesis; terpenoid biosynthesis. Functionally, monoterpene synthase involved in the biosynthesis of volatile compounds widely used in aromatherapy and folk medicine, and present in culinary herbs. Mediates the conversion of (2E)-geranyl diphosphate (GPP) into alpha-pinene and, as minor compounds, into alpha-phellandrene, limonene and alpha-terpinolene. This is Alpha pinene synthase, chloroplastic from Lavandula viridis (Green lavender).